A 512-amino-acid polypeptide reads, in one-letter code: Centrosomal protein CCDC61 (512 aa).

At Met-1 the chain carries N-acetylmethionine. A head domain region spans residues 1 to 143 (MDQPAGLQVD…PLPLPYQGKP (143 aa)). 2 coiled-coil regions span residues 178–205 (IWHL…SREE) and 248–275 (CRRL…LTSE). A disordered region spans residues 276–477 (LALYKRGRRT…KSLANSGGWV (202 aa)). At Thr-285 the chain carries Phosphothreonine. Basic and acidic residues predominate over residues 293 to 306 (TREDRASSSRERSA). 4 positions are modified to phosphoserine: Ser-334, Ser-336, Ser-373, and Ser-376. The span at 407-425 (RSSSVDSFRSRCSSASSCS) shows a compositional bias: low complexity. Phosphoserine is present on residues Ser-447 and Ser-473.

The protein belongs to the CCDC61 family. Forms homodimers (via head domain). Interacts with CEP170. Interacts with PCM1 and CEP131. Binds tubulin.

Its subcellular location is the cytoplasm. It localises to the cytoskeleton. The protein resides in the microtubule organizing center. It is found in the centrosome. The protein localises to the centriolar satellite. Its subcellular location is the cilium basal body. Its function is as follows. Microtubule-binding centrosomal protein required for centriole cohesion, independently of the centrosome-associated protein/CEP250 and rootletin/CROCC linker. In interphase, required for anchoring microtubule at the mother centriole subdistal appendages and for centrosome positioning. During mitosis, may be involved in spindle assembly and chromatin alignment by regulating the organization of spindle microtubules into a symmetrical structure. Has been proposed to play a role in CEP170 recruitment to centrosomes. However, this function could not be confirmed. Plays a non-essential role in ciliogenesis. This chain is Centrosomal protein CCDC61, found in Homo sapiens (Human).